We begin with the raw amino-acid sequence, 161 residues long: Ribonuclease H (161 aa).

An RNase H type-1 domain is found at 3–144; sequence GLKQISIYTD…CDDLARQAAE (142 aa). Positions 12, 50, 72, and 136 each coordinate Mg(2+). The segment at 133-161 is disordered; it reads ERCDDLARQAAEAKPSQEDSGYINQQAQA. The segment covering 150-161 has biased composition (polar residues); that stretch reads EDSGYINQQAQA.

This sequence belongs to the RNase H family. Monomer. The cofactor is Mg(2+).

It localises to the cytoplasm. The enzyme catalyses Endonucleolytic cleavage to 5'-phosphomonoester.. In terms of biological role, endonuclease that specifically degrades the RNA of RNA-DNA hybrids. This chain is Ribonuclease H, found in Shewanella halifaxensis (strain HAW-EB4).